We begin with the raw amino-acid sequence, 338 residues long: Uroporphyrinogen decarboxylase (338 aa).

Substrate contacts are provided by residues 25–29 (RQAGR), F44, D75, Y146, S201, and H314.

Belongs to the uroporphyrinogen decarboxylase family. Homodimer.

The protein localises to the cytoplasm. It catalyses the reaction uroporphyrinogen III + 4 H(+) = coproporphyrinogen III + 4 CO2. It participates in porphyrin-containing compound metabolism; protoporphyrin-IX biosynthesis; coproporphyrinogen-III from 5-aminolevulinate: step 4/4. Its function is as follows. Catalyzes the decarboxylation of four acetate groups of uroporphyrinogen-III to yield coproporphyrinogen-III. This is Uroporphyrinogen decarboxylase from Aquifex aeolicus (strain VF5).